The following is a 677-amino-acid chain: Probable serine/threonine-protein kinase mkcF (677 aa).

Residues Met-1 to Arg-58 form the SH3 domain. Residues Thr-72–Arg-244 are disordered. Over residues Gly-79–Thr-94 the composition is skewed to low complexity. Residues Gly-105–Gln-126 show a composition bias toward polar residues. The span at Ser-127–Asn-146 shows a compositional bias: low complexity. The span at Thr-158–Phe-174 shows a compositional bias: polar residues. Residues Ser-175–Ser-192 show a composition bias toward low complexity. Residues Asp-209–Tyr-224 show a composition bias toward basic and acidic residues. A compositionally biased stretch (low complexity) spans Ser-230 to Ser-240. In terms of domain architecture, Protein kinase spans Ile-401 to Phe-646. ATP is bound by residues Val-407 to Val-415 and Lys-428. The active-site Proton acceptor is Asp-519.

This sequence belongs to the protein kinase superfamily. Ser/Thr protein kinase family. STE20 subfamily. Requires Mg(2+) as cofactor.

The enzyme catalyses L-seryl-[protein] + ATP = O-phospho-L-seryl-[protein] + ADP + H(+). It catalyses the reaction L-threonyl-[protein] + ATP = O-phospho-L-threonyl-[protein] + ADP + H(+). The sequence is that of Probable serine/threonine-protein kinase mkcF from Dictyostelium discoideum (Social amoeba).